A 94-amino-acid chain; its full sequence is Venom protein 59.1 (94 aa).

The signal sequence occupies residues 1–22 (MNSREMFCVFILFASFFYCSYA). 6 disulfides stabilise this stretch: Cys-19-Cys-47, Cys-26-Cys-49, Cys-32-Cys-50, Cys-38-Cys-53, Cys-61-Cys-76, and Cys-70-Cys-91. The IGFBP N-terminal domain occupies 23–94 (EQECNCDKSC…GEALEICLRA (72 aa)).

In terms of tissue distribution, expressed by the venom gland.

Its subcellular location is the secreted. This Lychas mucronatus (Chinese swimming scorpion) protein is Venom protein 59.1.